A 549-amino-acid chain; its full sequence is Probable protein kinase UbiB (549 aa).

The Protein kinase domain occupies 123–501; sequence DFNEIPLASA…QQQAHKSNYL (379 aa). Residues 129-137 and Lys152 each bind ATP; that span reads LASASISQV. The active-site Proton acceptor is Asp287. Transmembrane regions (helical) follow at residues 496–516 and 520–540; these read HKSN…TLLI and ATLW…FVGW.

It belongs to the ABC1 family. UbiB subfamily.

The protein localises to the cell inner membrane. It functions in the pathway cofactor biosynthesis; ubiquinone biosynthesis [regulation]. Functionally, is probably a protein kinase regulator of UbiI activity which is involved in aerobic coenzyme Q (ubiquinone) biosynthesis. This Shewanella baltica (strain OS223) protein is Probable protein kinase UbiB.